The chain runs to 125 residues: Small ribosomal subunit protein uS12 (125 aa).

Residue aspartate 89 is modified to 3-methylthioaspartic acid. A disordered region spans residues 105 to 125 (AGVKDRKQARSKYGAKRPKAA). A compositionally biased stretch (basic residues) spans 113–125 (ARSKYGAKRPKAA).

This sequence belongs to the universal ribosomal protein uS12 family. Part of the 30S ribosomal subunit. Contacts proteins S8 and S17. May interact with IF1 in the 30S initiation complex.

In terms of biological role, with S4 and S5 plays an important role in translational accuracy. Its function is as follows. Interacts with and stabilizes bases of the 16S rRNA that are involved in tRNA selection in the A site and with the mRNA backbone. Located at the interface of the 30S and 50S subunits, it traverses the body of the 30S subunit contacting proteins on the other side and probably holding the rRNA structure together. The combined cluster of proteins S8, S12 and S17 appears to hold together the shoulder and platform of the 30S subunit. In Methylobacillus flagellatus (strain ATCC 51484 / DSM 6875 / VKM B-1610 / KT), this protein is Small ribosomal subunit protein uS12.